We begin with the raw amino-acid sequence, 308 residues long: Ornithine carbamoyltransferase (308 aa).

Carbamoyl phosphate contacts are provided by residues 55 to 58 (STRT), Q82, R106, and 133 to 136 (HPCQ). L-ornithine is bound by residues N164, D227, and 231–232 (SM). Residues 267-268 (CL) and R295 each bind carbamoyl phosphate.

The protein belongs to the aspartate/ornithine carbamoyltransferase superfamily. OTCase family.

It localises to the cytoplasm. It carries out the reaction carbamoyl phosphate + L-ornithine = L-citrulline + phosphate + H(+). It functions in the pathway amino-acid biosynthesis; L-arginine biosynthesis; L-arginine from L-ornithine and carbamoyl phosphate: step 1/3. In terms of biological role, reversibly catalyzes the transfer of the carbamoyl group from carbamoyl phosphate (CP) to the N(epsilon) atom of ornithine (ORN) to produce L-citrulline. The protein is Ornithine carbamoyltransferase of Prochlorococcus marinus (strain MIT 9312).